Here is a 545-residue protein sequence, read N- to C-terminus: Squalene monooxygenase SE2 (545 aa).

Residues 12–32 (EYFLMFAATLLFGFVLYLFTL) traverse the membrane as a helical segment. FAD contacts are provided by residues 86-87 (VA), 106-107 (ER), arginine 114, arginine 185, valine 201, aspartate 364, and methionine 377. A run of 2 helical transmembrane segments spans residues 475-495 (LFFH…IPFP) and 500-520 (MWLG…IIKS).

It belongs to the squalene monooxygenase family. It depends on FAD as a cofactor. In terms of tissue distribution, weak expression in petioles and flower buds and barely detectable in roots and leaves. In petioles, preferentially observed in vascular bundle tissue (phloem cells and parenchymatous cells near xylem) and resin ducts.

The protein resides in the membrane. It carries out the reaction squalene + reduced [NADPH--hemoprotein reductase] + O2 = (S)-2,3-epoxysqualene + oxidized [NADPH--hemoprotein reductase] + H2O + H(+). Its pathway is terpene metabolism; lanosterol biosynthesis; lanosterol from farnesyl diphosphate: step 2/3. Functionally, component of the triterpene saponins (e.g. ginsenosides or panaxosides) and phytosterols biosynthetic pathways. Catalyzes the first oxygenation step in sterol biosynthesis and is suggested to be one of the rate-limiting enzymes in this pathway. The protein is Squalene monooxygenase SE2 of Panax ginseng (Korean ginseng).